The following is a 474-amino-acid chain: MKGVGTEIGTIHFVGIGGIGMSGIAEVMHNMGYSVQGSDMAESYVVEGLRSRGIKVMIGQKAENVAGVAVVVTSTAVKRDNPEVVAALENRIPVVRRAEMLAELMRLKSTVAVAGTHGKTTTTSMVACLLDAGGIDPTVINGGIINSYGSNARLGDSDWMVVEADESDGSFLRLDGTLAVVTNIDPEHLDHYGSFERVKSAFVEFIENVPFYGAAMLCIDHPEVQAIIPKVRDRRVVTYGFSAQADVRGEGVTPIPGGNRFTAVLRQRDGSFRRIEGIELPMPGRHNVQNALAAVAVAVEMGVSDELIRGGFAKFGGVKRRFTKVGEVDIGSGAVTIIDDYGHHPVEIRAVLAAAREGVQGRVIAVVQPHRFTRLRDHMDEFQGAFNDADVVYAAPVYPAGEQPIEGVDSAAMVEGIKARGHRSAHLTTGADELAKELAATVQAGDMVVCLGAGDITKWAAGLADAIARERAGA.

Position 115-121 (115-121 (GTHGKTT)) interacts with ATP.

The protein belongs to the MurCDEF family.

It localises to the cytoplasm. The enzyme catalyses UDP-N-acetyl-alpha-D-muramate + L-alanine + ATP = UDP-N-acetyl-alpha-D-muramoyl-L-alanine + ADP + phosphate + H(+). It participates in cell wall biogenesis; peptidoglycan biosynthesis. In terms of biological role, cell wall formation. The chain is UDP-N-acetylmuramate--L-alanine ligase from Novosphingobium aromaticivorans (strain ATCC 700278 / DSM 12444 / CCUG 56034 / CIP 105152 / NBRC 16084 / F199).